A 309-amino-acid chain; its full sequence is Cysteinyl leukotriene receptor 2 (309 aa).

At 1–26 (MEVTGTPSSYSNRNCTIENFKKEFYP) the chain is on the extracellular side. Residue Asn14 is glycosylated (N-linked (GlcNAc...) asparagine). The helical transmembrane segment at 27–47 (IIYLIIFFWGALGNGFSIYVF) threads the bilayer. The Cytoplasmic portion of the chain corresponds to 48-56 (LQTCKKSTS). The helical transmembrane segment at 57–77 (VNVFMLNLATSDFLFISTLPF) threads the bilayer. Residues 78–98 (RADYYFRGSNWIFGDLACRVM) lie on the Extracellular side of the membrane. Cys95 and Cys171 are disulfide-bonded. The helical transmembrane segment at 99–119 (SYSLYVNMYTSIYFLTVLSVV) threads the bilayer. At 120-138 (RFLATVHPFRMFHVTSVRS) the chain is on the cytoplasmic side. The helical transmembrane segment at 139–159 (AWILCGIIWVFIMASSALLLV) threads the bilayer. Residues 160-187 (NGQEEKDNIISCLELSPQKFKSLLIMNH) lie on the Extracellular side of the membrane. Residues 188–208 (IAVAVGFLLPFLTLTVCYLLI) traverse the membrane as a helical segment. Over 209-229 (IRILLKAEIPESGPRAAHRKA) the chain is Cytoplasmic. Residues 230-250 (LTTIVIAMITFLLCFLPYHAL) traverse the membrane as a helical segment. At 251-271 (RTLHLVTWDKDSCGDVLHKAT) the chain is on the extracellular side. Residues 272–292 (VITLTMAAANSCFNPFLYYFA) form a helical membrane-spanning segment. The Cytoplasmic segment spans residues 293-309 (GENFKARLRAIFSKVHL).

Belongs to the G-protein coupled receptor 1 family. Widely expressed at low levels, with highest expression in the spleen, thymus and adrenal gland, and lower in the kidney, brain and peripheral blood leukocytes.

The protein localises to the cell membrane. Functionally, receptor for cysteinyl leukotrienes. The response is mediated via a G-protein that activates a phosphatidylinositol-calcium second messenger system. The rank order of affinities for the leukotrienes is LTC4 = LTD4 &gt;&gt; LTE4. The sequence is that of Cysteinyl leukotriene receptor 2 (Cysltr2) from Mus musculus (Mouse).